The sequence spans 938 residues: MMLDIKKTRGFHKIPQASKLQSTTKTSSVVATSASSQNEVPSPGGSAGSKVGATNPVRAANQRFFLVSSYKDPTFLKAECDLAHAHVTTSKVKTTLQPHRRSRAGEDSRNNNYNTSRAPTLINMRRPSLFNGNQQPTTTNSTTINNTTSRNTTSNTSNGVLKYSVRSTTATATSTSTRNYGKLKPLNNNQTTAGVAMMNGHTNNNNNNTRNSSNINNGGNNNMQRQQQQHDDISFIDSDDPPATGGPEAGISTTKTSICYFKPITPPLQLRHEQNQVQQQEEQPQPSSSKSASHRYPRPKSTIIASAHSNFAASFEKFSGGLYRQTNGETNIESKTSSNARRYGIDSLSIKASIEKFNNLSGQKRQNPGSGSGIGPGSATASGLGGGRLSVASRSNHGSQAGGSSSNLQQRYSSDLDNIRVAAGYSSSLTRAAYRTTATMNSVSTPVAVTSELGGPISGDGGETATAMGQPTSKVTVRGAHSNRQPIECDSVVLTNKASKDATTAATPTVATATATHTPATSSVSTVTVTAAAPNSASDSTLARSGTGSSSTARSVLPPMTPTSSRYWDRDSGTSRSSIGTSSALNSSSLKHNSDDGYKTASSSRDEKSEGLCGLRNIGNTCFMNSVIQCLSHTQELTRFLRSHHGSRSLSTKDQQILHEFAKLIQEMWTANVHTVTPMELKRAFSTKHRMYSDYNQQDAQEFLRFFLDSLHSALNSGVKGETLNIDDNLSDNKKADLTWEWYTRHENSLVRDLFVGQLKSTLKCTTCGNTSVTFDPFWDLSVPLPSSSRCKLEACLDLFIREEVLDGDEMPTCAKCKTRRKCTKSFTIQRFPKYLVIHLKRFSETRWSKLSNIVEFPTSDSELNMGSYGANSNSNVHYSLYAISNHMGSTAGGHYVALCKHPVSRKWHEFNDNIVSDALSENHLVSSSAYILFYERT.

6 disordered regions span residues 1-53 (MMLD…KVGA), 91-117 (KVKTTLQPHRRSRAGEDSRNNNYNTSR), 130-254 (FNGN…ISTT), 273-297 (EQNQVQQQEEQPQPSSSKSASHRYP), 360-410 (LSGQ…NLQQ), and 500-610 (KDAT…EKSE). Positions 22–36 (STTKTSSVVATSASS) are enriched in low complexity. Low complexity-rich tracts occupy residues 137–158 (TTTNSTTINNTTSRNTTSNTSN), 167–177 (STTATATSTST), 198–227 (MNGHTNNNNNNTRNSSNINNGGNNNMQRQQ), and 275–289 (NQVQQQEEQPQPSSS). Over residues 392-410 (ASRSNHGSQAGGSSSNLQQ) the composition is skewed to polar residues. Composition is skewed to low complexity over residues 502 to 555 (ATTA…TARS) and 574 to 583 (TSRSSIGTSS). Residues 592–610 (HNSDDGYKTASSSRDEKSE) are compositionally biased toward basic and acidic residues. The region spanning 613–938 (CGLRNIGNTC…SAYILFYERT (326 aa)) is the USP domain. Cysteine 622 serves as the catalytic Nucleophile. Zn(2+)-binding residues include cysteine 765, cysteine 768, cysteine 814, and cysteine 817. The active-site Proton acceptor is the histidine 895.

The protein belongs to the peptidase C19 family. Interacts (via N-terminus) with imd (via N-terminus). Interacts with Rpt6.

The enzyme catalyses Thiol-dependent hydrolysis of ester, thioester, amide, peptide and isopeptide bonds formed by the C-terminal Gly of ubiquitin (a 76-residue protein attached to proteins as an intracellular targeting signal).. Functionally, hydrolase that deubiquitinates polyubiquitinated target proteins. Required for preventing the activation of the Toll signaling cascades under unchallenged conditions. Essential for bodily calcium homeostasis. Required for preventing the activation of the immune deficiency (Imd) signaling cascade under unchallenged conditions. Regulates the Imd pathway by specifically removing 'Lys-48'-linked ubiquitin from imd. Also promotes imd degradation probably by binding to imd and enhancing its association with the proteasome. The polypeptide is Ubiquitin carboxyl-terminal hydrolase Usp2 (Drosophila melanogaster (Fruit fly)).